Here is a 142-residue protein sequence, read N- to C-terminus: Transcription antitermination protein NusB (142 aa).

Belongs to the NusB family.

In terms of biological role, involved in transcription antitermination. Required for transcription of ribosomal RNA (rRNA) genes. Binds specifically to the boxA antiterminator sequence of the ribosomal RNA (rrn) operons. The chain is Transcription antitermination protein NusB from Persephonella marina (strain DSM 14350 / EX-H1).